The following is a 269-amino-acid chain: 3-methyl-2-oxobutanoate hydroxymethyltransferase (269 aa).

Positions 52 and 91 each coordinate Mg(2+). Residues 52–53, D91, and K121 each bind 3-methyl-2-oxobutanoate; that span reads DT. E123 lines the Mg(2+) pocket. The active-site Proton acceptor is E186.

It belongs to the PanB family. Homodecamer; pentamer of dimers. Mg(2+) is required as a cofactor.

Its subcellular location is the cytoplasm. The catalysed reaction is 3-methyl-2-oxobutanoate + (6R)-5,10-methylene-5,6,7,8-tetrahydrofolate + H2O = 2-dehydropantoate + (6S)-5,6,7,8-tetrahydrofolate. Its pathway is cofactor biosynthesis; (R)-pantothenate biosynthesis; (R)-pantoate from 3-methyl-2-oxobutanoate: step 1/2. Its function is as follows. Catalyzes the reversible reaction in which hydroxymethyl group from 5,10-methylenetetrahydrofolate is transferred onto alpha-ketoisovalerate to form ketopantoate. This Rhodopirellula baltica (strain DSM 10527 / NCIMB 13988 / SH1) protein is 3-methyl-2-oxobutanoate hydroxymethyltransferase.